We begin with the raw amino-acid sequence, 153 residues long: Large ribosomal subunit protein uL30 (153 aa).

The protein belongs to the universal ribosomal protein uL30 family. In terms of assembly, part of the 50S ribosomal subunit.

The protein is Large ribosomal subunit protein uL30 of Methanocella arvoryzae (strain DSM 22066 / NBRC 105507 / MRE50).